A 238-amino-acid chain; its full sequence is LexA repressor (238 aa).

The H-T-H motif DNA-binding region spans 26-46 (FDEMKDALDLASKSGIHRLIT). Catalysis depends on for autocatalytic cleavage activity residues serine 158 and lysine 196.

It belongs to the peptidase S24 family. In terms of assembly, homodimer.

It carries out the reaction Hydrolysis of Ala-|-Gly bond in repressor LexA.. Its function is as follows. Represses a number of genes involved in the response to DNA damage (SOS response), including recA and lexA. In the presence of single-stranded DNA, RecA interacts with LexA causing an autocatalytic cleavage which disrupts the DNA-binding part of LexA, leading to derepression of the SOS regulon and eventually DNA repair. In Sinorhizobium medicae (strain WSM419) (Ensifer medicae), this protein is LexA repressor.